The chain runs to 154 residues: Protein FAM162A (154 aa).

Residues 76-102 (RFKKEDEIPETVSLEMLDTAKNKMRVK) form a required for proapoptotic activity region. The chain crosses the membrane as a helical span at residues 103-120 (ISYLMIALTVVGCICMVI).

The protein belongs to the UPF0389 family. In terms of assembly, interacts with HSP90AB1; HSP90AB1 is essential for FAM162A mitochondrial localization and pro-apoptotic activity. Interacts with VDAC2; the interaction is probably involved in inducing mitochondrial permeability transition.

Its subcellular location is the mitochondrion membrane. Functionally, proposed to be involved in regulation of apoptosis; the exact mechanism may differ between cell types/tissues. May be involved in hypoxia-induced cell death of transformed cells implicating cytochrome C release and caspase activation (such as CASP9) and inducing mitochondrial permeability transition. May be involved in hypoxia-induced cell death of neuronal cells probably by promoting release of AIFM1 from mitochondria to cytoplasm and its translocation to the nucleus; however, the involvement of caspases has been reported conflictingly. In Pongo abelii (Sumatran orangutan), this protein is Protein FAM162A (FAM162A).